Consider the following 477-residue polypeptide: Ankyrin repeat, SAM and basic leucine zipper domain-containing protein 1 (477 aa).

A disordered region spans residues 1–24 (MATSALRGLAVAGGGESSESEDDG). S17, S18, and S20 each carry phosphoserine. ANK repeat units follow at residues 46–76 (EKKE…SVDA), 80–109 (YGWT…NASF), 112–146 (DKQT…DPNV), 150–179 (RLMT…EVNT), 183–212 (NGYT…NKML), and 216–245 (DGKL…PLEG). The region spanning 274–336 (SYAEFGDLEV…KILAALKELE (63 aa)) is the SAM domain.

Interacts with DDX4, PIWIL1, RANBP9 and TDRD1.

The protein resides in the cytoplasm. Functionally, plays a central role during spermatogenesis by repressing transposable elements and preventing their mobilization, which is essential for the germline integrity. Acts via the piRNA metabolic process, which mediates the repression of transposable elements during meiosis by forming complexes composed of piRNAs and Piwi proteins and governs the methylation and subsequent repression of transposons. Its association with pi-bodies suggests a participation in the primary piRNAs metabolic process. Required prior to the pachytene stage to facilitate the production of multiple types of piRNAs, including those associated with repeats involved in the regulation of retrotransposons. May act by mediating protein-protein interactions during germ cell maturation. In Saimiri boliviensis boliviensis (Bolivian squirrel monkey), this protein is Ankyrin repeat, SAM and basic leucine zipper domain-containing protein 1 (ASZ1).